Reading from the N-terminus, the 251-residue chain is MARRTKIYEGKAKILYEGPEPGTIVQYFKDDATAFNAQKKDVIEGKGVLNNRLSEYFMTGLAQIGVPTHFIRRLNMREQLVRACEIVPLEVIVRNFAAGTMSKRLGIEEGTQLPRPIVEYCLKNDELGDPLVTEEHIAAFGWASQQDMDDILSLALRVNDYLSGLMYGVGIKLVDFKIEIGRVYENDYPRLIIADEISPDSCRLWDIATGQKLDKDVFRRDLGSLTDAYSEVARRLGVIPKTQIAKPTLIN.

Belongs to the SAICAR synthetase family.

The catalysed reaction is 5-amino-1-(5-phospho-D-ribosyl)imidazole-4-carboxylate + L-aspartate + ATP = (2S)-2-[5-amino-1-(5-phospho-beta-D-ribosyl)imidazole-4-carboxamido]succinate + ADP + phosphate + 2 H(+). The protein operates within purine metabolism; IMP biosynthesis via de novo pathway; 5-amino-1-(5-phospho-D-ribosyl)imidazole-4-carboxamide from 5-amino-1-(5-phospho-D-ribosyl)imidazole-4-carboxylate: step 1/2. The protein is Phosphoribosylaminoimidazole-succinocarboxamide synthase of Ruegeria pomeroyi (strain ATCC 700808 / DSM 15171 / DSS-3) (Silicibacter pomeroyi).